A 91-amino-acid polypeptide reads, in one-letter code: uncharacterized protein (91 aa).

The tract at residues 71 to 91 (NRENNSRSSVKQIINQETEEE) is disordered. A compositionally biased stretch (polar residues) spans 76-91 (SRSSVKQIINQETEEE).

This is an uncharacterized protein from Bacillus subtilis (strain 168).